A 356-amino-acid polypeptide reads, in one-letter code: Glutamine synthetase (356 aa).

Residues 26-105 (IMAEYVWVDA…VLAECWNAGG (80 aa)) enclose the GS beta-grasp domain. A GS catalytic domain is found at 112-356 (FRHDCVKVMD…TKALLQFSLA (245 aa)).

Belongs to the glutamine synthetase family. As to quaternary structure, homooctamer.

It is found in the cytoplasm. It catalyses the reaction L-glutamate + NH4(+) + ATP = L-glutamine + ADP + phosphate + H(+). In Fusarium solani subsp. phaseoli (Nectria haematococca), this protein is Glutamine synthetase (GLN1).